The following is a 388-amino-acid chain: Chorismate synthase (388 aa).

NADP(+) is bound by residues arginine 39 and arginine 45. FMN is bound by residues 130–132 (RSS), 251–252 (NA), glycine 296, 311–315 (KPIPT), and arginine 337.

This sequence belongs to the chorismate synthase family. As to quaternary structure, homotetramer. The cofactor is FMNH2.

The catalysed reaction is 5-O-(1-carboxyvinyl)-3-phosphoshikimate = chorismate + phosphate. Its pathway is metabolic intermediate biosynthesis; chorismate biosynthesis; chorismate from D-erythrose 4-phosphate and phosphoenolpyruvate: step 7/7. Functionally, catalyzes the anti-1,4-elimination of the C-3 phosphate and the C-6 proR hydrogen from 5-enolpyruvylshikimate-3-phosphate (EPSP) to yield chorismate, which is the branch point compound that serves as the starting substrate for the three terminal pathways of aromatic amino acid biosynthesis. This reaction introduces a second double bond into the aromatic ring system. The protein is Chorismate synthase of Streptococcus agalactiae serotype III (strain NEM316).